We begin with the raw amino-acid sequence, 671 residues long: Diguanylate cyclase DgcP (671 aa).

2 disordered regions span residues A204–P223 and E278–P298. Mg(2+) is bound at residue D549. 3 residues coordinate substrate: N557, H562, and D566. Residue E592 coordinates Mg(2+). The active site involves E592.

In terms of assembly, homodimer. Mg(2+) serves as cofactor.

Its subcellular location is the cell inner membrane. It catalyses the reaction 2 GTP = 3',3'-c-di-GMP + 2 diphosphate. It participates in purine metabolism; 3',5'-cyclic di-GMP biosynthesis. Catalyzes the synthesis of cyclic-di-GMP (c-di-GMP) via the condensation of 2 GTP molecules. Cyclic-di-GMP is a second messenger which controls cell surface-associated traits in bacteria. Localizes at the cell poles through interaction with FimV where it increases the local pools of c-di-GMP. This Pseudomonas aeruginosa (strain ATCC 15692 / DSM 22644 / CIP 104116 / JCM 14847 / LMG 12228 / 1C / PRS 101 / PAO1) protein is Diguanylate cyclase DgcP (dgcP).